The primary structure comprises 260 residues: MGESALESGPVPGAPAGGPVHAVTVVTLLEKLATMLETLRERQGGLAQRQGGLAGSVRRIQSNLGALSRSHDTTSNTLAQLLAKAERVGSHADAAQERAVRRAAQVQRLEANHGLLVARGKLHVLLFKEEAEIPAKAFQKAPEPLGPVELGPQLPEAEAEESSDEEEPVESRARRLRRTGLEKVQSLRRALSGRKGHAAPTPTPVKPPRLGPGRSAEGQWEAQPALESKLEPEPPQDTEEDPGRPGAAEAAAVLQVESAA.

The segment at 1-84 (MGESALESGP…SNTLAQLLAK (84 aa)) is interaction with CAVIN1. Residues 20 to 78 (VHAVTVVTLLEKLATMLETLRERQGGLAQRQGGLAGSVRRIQSNLGALSRSHDTTSNTL) are leucine-zipper. A phosphoserine mark is found at serine 62 and serine 70. A Glycyl lysine isopeptide (Lys-Gly) (interchain with G-Cter in SUMO2) cross-link involves residue lysine 128. Positions 135–201 (AKAFQKAPEP…SGRKGHAAPT (67 aa)) are interaction with CAV1. The disordered stretch occupies residues 140 to 260 (KAPEPLGPVE…AAVLQVESAA (121 aa)). The span at 157–168 (AEAEESSDEEEP) shows a compositional bias: acidic residues. Phosphoserine occurs at positions 162, 163, and 171. Pro residues predominate over residues 201 to 210 (TPTPVKPPRL).

Belongs to the CAVIN family. Component of the CAVIN complex composed of CAVIN1, CAVIN2, CAVIN3 and CAVIN4. Interacts with PRKCD and with phosphatidylserine. Phosphatidylserine may form a bridge between PKC and PKC-binding partners and stabilize the binding. Interacts with PER2. Interacts with CAVIN1 and EPS15L1. Interacts (via leucine-zipper domain) with CAV1 in a cholesterol-sensitive manner. In vitro, phosphorylated by PRKCD.

It is found in the cytoplasm. Its subcellular location is the membrane. It localises to the caveola. The protein resides in the cytosol. Its function is as follows. Regulates the traffic and/or budding of caveolae. Plays a role in caveola formation in a tissue-specific manner. Required for the formation of caveolae in smooth muscle but not in the lung and heart endothelial cells. Regulates the equilibrium between cell surface-associated and cell surface-dissociated caveolae by promoting the rapid release of caveolae from the cell surface. Plays a role in the regulation of the circadian clock. Modulates the period length and phase of circadian gene expression and also regulates expression and interaction of the core clock components PER1/2 and CRY1/2. In Bos taurus (Bovine), this protein is Caveolae-associated protein 3 (CAVIN3).